Consider the following 977-residue polypeptide: Synaptonemal complex protein 2-like (977 aa).

Disordered stretches follow at residues 447 to 474, 574 to 593, 642 to 728, and 804 to 824; these read LGSQTSEHSSTTKTSSANRSVQKSLSNA, QSTERATPASRYRASMNSPL, RNKS…QDIM, and TEKNVNRSAADSEDSEDVFYS. Positions 449–462 are enriched in low complexity; sequence SQTSEHSSTTKTSS. Residues 463–474 show a composition bias toward polar residues; the sequence is ANRSVQKSLSNA. Positions 674–693 are enriched in basic and acidic residues; it reads SRKEMHRPEDINPKSPHSAE.

The protein belongs to the SYCP2 family. Ubiquitinated and gradually degraded by the proteasome during oocyte maturation. Post-translationally, phosphorylated in maturing oocytes, before its degradation. As to expression, expressed in immature oocytes (at protein level). Expressed in the ovary.

The protein localises to the nucleus. Its subcellular location is the chromosome. It localises to the centromere. It is found in the nucleolus. Oocyte-specific protein that localizes to centromeres at the dictyate stage and regulates the survival of primordial oocytes. The polypeptide is Synaptonemal complex protein 2-like (sycp2l) (Xenopus laevis (African clawed frog)).